Reading from the N-terminus, the 789-residue chain is Aryl hydrocarbon receptor nuclear translocator (789 aa).

Polar residues predominate over residues 1–14; it reads MAATTANPEMTSDV. The disordered stretch occupies residues 1 to 97; that stretch reads MAATTANPEM…RLARENHSEI (97 aa). Ala2 bears the N-acetylalanine mark. Residues 26–35 are compositionally biased toward gly residues; that stretch reads SGPGIQGGGA. Lys58 participates in a covalent cross-link: Glycyl lysine isopeptide (Lys-Gly) (interchain with G-Cter in SUMO2). The span at 60–97 shows a compositional bias: basic and acidic residues; it reads LRCDDDQMSNDKERFARSDDEQSSADKERLARENHSEI. Ser77 is subject to Phosphoserine. The DNA-binding stretch occupies residues 88–128; it reads RLARENHSEIERRRRNKMTAYITELSDMVPTCSALARKPDK. Positions 89-142 constitute a bHLH domain; that stretch reads LARENHSEIERRRRNKMTAYITELSDMVPTCSALARKPDKLTILRMAVSHMKSL. Residues 112-168 form a required for heterodimer formation with HIF1A region; the sequence is LSDMVPTCSALARKPDKLTILRMAVSHMKSLRGTGNTSTDGSYKPSFLTDQELKHLI. Residues 112–264 are required for heterodimer formation with EPAS1; the sequence is LSDMVPTCSA…MCMGSRRSFI (153 aa). 2 consecutive PAS domains span residues 161 to 235 and 349 to 419; these read DQEL…LTGR and PNCT…VKLK. The segment at 167–171 is mediates the transcription activity and dimerization of the AHR:ARNT complex; that stretch reads LILEA. Positions 424 to 467 constitute a PAC domain; the sequence is SVMFRFRSKNQEWLWMRTSSFTFQNPYSDEIEYIICTNTNVKNS. The segment covering 465 to 481 has biased composition (polar residues); it reads KNSSQEPRPTLSNTIQR. Disordered regions lie at residues 465 to 492 and 672 to 789; these read KNSS…NLPL and TPSS…PFSE. The segment covering 672–696 has biased composition (low complexity); sequence TPSSFSSMSLPGAPTASPGAAAYPS. Positions 708-719 are enriched in polar residues; sequence TGQTAGQFQTRT. Composition is skewed to low complexity over residues 723 to 733 and 743 to 756; these read VGVWPQWQGQQ and QHVQ…PGQP.

As to quaternary structure, monomer. Homodimer only upon binding to a DNA. Efficient DNA binding requires dimerization with another bHLH protein. Interacts with TACC3. Interacts with HIF1A, EPAS1, NPAS1 and NPAS3; forms a heterodimer that binds core DNA sequence 5'-TACGTG-3' within the hypoxia response element (HRE) of target gene promoters. Forms a heterodimer with AHRR, as well as with other bHLH proteins. Interacts with NOCA7. Interacts with TACC3. Interacts with AHR; the heterodimer ARNT:AHR binds to core DNA sequence 5'-TGCGTG-3' within the dioxin response element (DRE) of target gene promoters and activates their transcription. Interacts with SIM1 and NPAS4.

The protein localises to the nucleus. In terms of biological role, required for activity of the AHR. Upon ligand binding, AHR translocates into the nucleus, where it heterodimerizes with ARNT and induces transcription by binding to xenobiotic response elements (XRE). Not required for the ligand-binding subunit to translocate from the cytosol to the nucleus after ligand binding. The complex initiates transcription of genes involved in the regulation of a variety of biological processes, including angiogenesis, hematopoiesis, drug and lipid metabolism, cell motility and immune modulation. The heterodimer binds to core DNA sequence 5'-TACGTG-3' within the hypoxia response element (HRE) of target gene promoters and functions as a transcriptional regulator of the adaptive response to hypoxia. The heterodimer ARNT:AHR binds to core DNA sequence 5'-TGCGTG-3' within the dioxin response element (DRE) of target gene promoters and activates their transcription. This chain is Aryl hydrocarbon receptor nuclear translocator, found in Homo sapiens (Human).